The chain runs to 300 residues: GTP-binding protein At2g22870 (300 aa).

One can recognise an EngB-type G domain in the interval D119–Y297. GTP-binding positions include G127–S134, G154–L158, D172–G175, T239–D242, and T276–S278. Residues S134 and T156 each contribute to the Mg(2+) site.

It belongs to the TRAFAC class TrmE-Era-EngA-EngB-Septin-like GTPase superfamily. EngB GTPase family. It depends on Mg(2+) as a cofactor.

The sequence is that of GTP-binding protein At2g22870 (EMB2001) from Arabidopsis thaliana (Mouse-ear cress).